The primary structure comprises 202 residues: MNILRKIVKSCKDEEDQKPALVSAPPDDDDLWLPPPEYVPLTEITGKKNMRNFCVNGEIKICSPNGYSFRILRHILKSFDGVYSGNRRMIGLVKVVIGLALSGAPVPEGMNWVYKIRRTLVFQWAESRGPLDGEELEYSQEITWDDDSEFIGLQIRVSARQCHIQGRVWCINMNSRACQLWSDMSLKTQQSDEDKNTSLLLE.

The PPXY motif motif lies at 35-38 (PPEY). Positions 115–151 (KIRRTLVFQWAESRGPLDGEELEYSQEITWDDDSEFI) are essential for glycoprotein binding.

This sequence belongs to the lyssavirus matrix protein family. As to quaternary structure, homomultimer. Interacts with nucleoprotein and with the cytoplasmic domain of glycoprotein.

It is found in the virion membrane. The protein resides in the host endomembrane system. Functionally, plays a major role in assembly and budding of virion. Completely covers the ribonucleoprotein coil and keep it in condensed bullet-shaped form. Inhibits viral transcription and stimulates replication. Plays a major role in early induction of TRAIL-mediated apoptosis in infected neurons. The sequence is that of Matrix protein (M) from Aravan virus (ARAV).